The following is a 400-amino-acid chain: Enoyl-[acyl-carrier-protein] reductase [NADH] (400 aa).

NAD(+) is bound by residues 48 to 53, 74 to 75, 111 to 112, and 139 to 140; these read GASTGY, FE, DA, and LA. Residue Y225 participates in substrate binding. Y235 serves as the catalytic Proton donor. NAD(+)-binding positions include K244 and 273 to 275; that span reads VVT.

This sequence belongs to the TER reductase family. As to quaternary structure, monomer.

The enzyme catalyses a 2,3-saturated acyl-[ACP] + NAD(+) = a (2E)-enoyl-[ACP] + NADH + H(+). It participates in lipid metabolism; fatty acid biosynthesis. In terms of biological role, involved in the final reduction of the elongation cycle of fatty acid synthesis (FAS II). Catalyzes the reduction of a carbon-carbon double bond in an enoyl moiety that is covalently linked to an acyl carrier protein (ACP). The protein is Enoyl-[acyl-carrier-protein] reductase [NADH] of Burkholderia cenocepacia (strain HI2424).